The following is a 219-amino-acid chain: uncharacterized protein (219 aa).

The disordered stretch occupies residues 42–71; sequence RQPRVVPVTSSDPEVVDDEDDEDQSDDSDE. The span at 45 to 54 shows a compositional bias: low complexity; that stretch reads RVVPVTSSDP. Residues 55–71 are compositionally biased toward acidic residues; it reads EVVDDEDDEDQSDDSDE.

This is an uncharacterized protein from Dryophytes versicolor (chameleon treefrog).